Here is a 1160-residue protein sequence, read N- to C-terminus: DNA polymerase III subunit alpha (1160 aa).

It is found in the cytoplasm. It catalyses the reaction DNA(n) + a 2'-deoxyribonucleoside 5'-triphosphate = DNA(n+1) + diphosphate. In terms of biological role, DNA polymerase III is a complex, multichain enzyme responsible for most of the replicative synthesis in bacteria. This DNA polymerase also exhibits 3' to 5' exonuclease activity. The alpha chain is the DNA polymerase. The protein is DNA polymerase III subunit alpha (dnaE) of Escherichia coli O6:H1 (strain CFT073 / ATCC 700928 / UPEC).